A 161-amino-acid chain; its full sequence is MDQETVGNVVLLAIVTLISVVQNGFFAHKVEHESRTQNGRSFQRTGTLAFERVYTANQNCVDAYPTFLAVLWSAGLLCSQVPAAFAGLMYLFVRQKYFVGYLGERTQSTPGYIFGKRIILFLFLMSVAGIFNYYLIFFFGSDFENYIKTISTTISPLLLIP.

Residues 1–8 (MDQETVGN) are Lumenal-facing. A helical transmembrane segment spans residues 9–30 (VVLLAIVTLISVVQNGFFAHKV). At 31–52 (EHESRTQNGRSFQRTGTLAFER) the chain is on the cytoplasmic side. The chain crosses the membrane as a helical span at residues 53–77 (VYTANQNCVDAYPTFLAVLWSAGLL). At 78–80 (CSQ) the chain is on the lumenal side. Residues 81-102 (VPAAFAGLMYLFVRQKYFVGYL) traverse the membrane as a helical segment. The Cytoplasmic portion of the chain corresponds to 103-107 (GERTQ). Residues 108-115 (STPGYIFG) lie within the membrane without spanning it. Residues 116–128 (KRIILFLFLMSVA) form a helical membrane-spanning segment. The Lumenal segment spans residues 129-161 (GIFNYYLIFFFGSDFENYIKTISTTISPLLLIP).

The protein belongs to the MAPEG family. In terms of assembly, homotrimer. Interacts with LTC4S and ALOX5.

The protein localises to the nucleus membrane. It is found in the endoplasmic reticulum membrane. Required for leukotriene biosynthesis by ALOX5 (5-lipoxygenase). Anchors ALOX5 to the membrane. Binds arachidonic acid, and could play an essential role in the transfer of arachidonic acid to ALOX5. Binds to MK-886, a compound that blocks the biosynthesis of leukotrienes. The polypeptide is Arachidonate 5-lipoxygenase-activating protein (ALOX5AP) (Homo sapiens (Human)).